The primary structure comprises 176 residues: Cytochrome b (176 aa).

Helical transmembrane passes span 33 to 53, 77 to 98, and 113 to 133; these read FGSL…FLAM, WVLR…YLHV, and WNVG…GYVL. Heme b is bound by residues histidine 83 and histidine 97.

Belongs to the cytochrome b family. The cytochrome bc1 complex contains 11 subunits: 3 respiratory subunits (MT-CYB, CYC1 and UQCRFS1), 2 core proteins (UQCRC1 and UQCRC2) and 6 low-molecular weight proteins (UQCRH/QCR6, UQCRB/QCR7, UQCRQ/QCR8, UQCR10/QCR9, UQCR11/QCR10 and a cleavage product of UQCRFS1). This cytochrome bc1 complex then forms a dimer. Heme b serves as cofactor.

Its subcellular location is the mitochondrion inner membrane. In terms of biological role, component of the ubiquinol-cytochrome c reductase complex (complex III or cytochrome b-c1 complex) that is part of the mitochondrial respiratory chain. The b-c1 complex mediates electron transfer from ubiquinol to cytochrome c. Contributes to the generation of a proton gradient across the mitochondrial membrane that is then used for ATP synthesis. The protein is Cytochrome b (MT-CYB) of Corynorhinus rafinesquii (Rafinesque's big-eared bat).